The primary structure comprises 224 residues: Prophage repressor CohE (224 aa).

The sequence is that of Prophage repressor CohE (cohE) from Escherichia coli (strain K12).